Reading from the N-terminus, the 801-residue chain is MARLFSLKPLVLALGFCFGTHCAADTVAAEEADGRVAEGGAQGASESAQASDLTLGSTCLFCSNESGSPERTEAAVQGSGEASVPEDYTRIVADRMEGQSKVKVRAEGSVIIERDGAVLNTDWADYDQSGDTVTVGDRFALQQDGTLIRGETLTYNLDQQTGEAHNVRMETEQGGRRLQSVSRTAEMLGEGRYKLTETQFNTCSAGDAGWYVKAASVEADRGKGIGVAKHAAFVFGGVPLFYTPWADFPLDGNRKSGLLVPSVSAGSDGVSLSVPYYFNLAPNFDATFAPGIIGERGATFDGQIRYLRPDYSGQTDLTWLPHDKKSGRNNRYQAKWQHRHDISDTLQAGVDFNQVSDSGYYRDFYGGEEIAGNVNLNRRVWLDYGGRAAGGSLNAGLSVQKYQTLANQSGYKDEPYAIMPRLSADWHKNAGRAQIGVSAQFTRFSHDGRQDGSRLVVYPGIKWDFSNSWGYVRPKLGLHATYYSLDSFGGKASRSVGRVLPVVNIDGGTTFERNTRLFGGGVVQTIEPRLFYNYIPAKSQNDLPNFDSSESSFGYGQLFRENLYYGNDRINAANSLSTAVQSRILDGATGEERFRAGIGQKFYFKDDAVMLDGSVGKNPRSRSDWVAFASGGIGGRFTLDSSIHYNQNDKRAEHYAVGAGYRPAPGKVLNARYKYGRNEKIYLQADGSYFYDKLSQLDLSAQWPLTRNLSAVVRYNYGFEAKKPIEMLAGAEYKSSCGCWGAGVYAQRYVTGENTYKNAVFFSLQLKDLSSVGRNPAGRMDVAVPGYIPAHSLSAGRNKRP.

An N-terminal signal peptide occupies residues M1 to A23.

The protein belongs to the LptD family. In terms of assembly, component of the lipopolysaccharide transport and assembly complex. Interacts with LptE and LptA.

Its subcellular location is the cell outer membrane. Together with LptE, is involved in the assembly of lipopolysaccharide (LPS) at the surface of the outer membrane. This Neisseria gonorrhoeae (strain ATCC 700825 / FA 1090) protein is LPS-assembly protein LptD.